The chain runs to 226 residues: Phosphoglycolate phosphatase (226 aa).

The active-site Nucleophile is the Asp-9. Residues Asp-9 and Asp-11 each coordinate Mg(2+). Lys-150 is a substrate binding site. Mg(2+)-binding residues include Asp-173 and Asp-177.

Belongs to the archaeal SPP-like hydrolase family. Mg(2+) serves as cofactor.

It catalyses the reaction 2-phosphoglycolate + H2O = glycolate + phosphate. In terms of biological role, catalyzes the dephosphorylation of 2-phosphoglycolate. This chain is Phosphoglycolate phosphatase, found in Methanosarcina mazei (strain ATCC BAA-159 / DSM 3647 / Goe1 / Go1 / JCM 11833 / OCM 88) (Methanosarcina frisia).